A 397-amino-acid polypeptide reads, in one-letter code: S-adenosylmethionine synthase (397 aa).

Histidine 16 is a binding site for ATP. Residue aspartate 18 participates in Mg(2+) binding. Glutamate 44 is a binding site for K(+). Glutamate 57 and glutamine 100 together coordinate L-methionine. A flexible loop region spans residues 100–110 (QSPDIAQGVDN). ATP is bound by residues 175–177 (DGK), 242–243 (RF), aspartate 251, 257–258 (RK), alanine 274, and lysine 278. An L-methionine-binding site is contributed by aspartate 251. L-methionine is bound at residue lysine 282.

It belongs to the AdoMet synthase family. Homotetramer; dimer of dimers. Requires Mg(2+) as cofactor. K(+) serves as cofactor.

The protein localises to the cytoplasm. It catalyses the reaction L-methionine + ATP + H2O = S-adenosyl-L-methionine + phosphate + diphosphate. Its pathway is amino-acid biosynthesis; S-adenosyl-L-methionine biosynthesis; S-adenosyl-L-methionine from L-methionine: step 1/1. Catalyzes the formation of S-adenosylmethionine (AdoMet) from methionine and ATP. The overall synthetic reaction is composed of two sequential steps, AdoMet formation and the subsequent tripolyphosphate hydrolysis which occurs prior to release of AdoMet from the enzyme. This Leifsonia xyli subsp. xyli (strain CTCB07) protein is S-adenosylmethionine synthase.